The sequence spans 572 residues: Proline--tRNA ligase (572 aa).

The protein belongs to the class-II aminoacyl-tRNA synthetase family. ProS type 1 subfamily. Homodimer.

It localises to the cytoplasm. The enzyme catalyses tRNA(Pro) + L-proline + ATP = L-prolyl-tRNA(Pro) + AMP + diphosphate. Catalyzes the attachment of proline to tRNA(Pro) in a two-step reaction: proline is first activated by ATP to form Pro-AMP and then transferred to the acceptor end of tRNA(Pro). As ProRS can inadvertently accommodate and process non-cognate amino acids such as alanine and cysteine, to avoid such errors it has two additional distinct editing activities against alanine. One activity is designated as 'pretransfer' editing and involves the tRNA(Pro)-independent hydrolysis of activated Ala-AMP. The other activity is designated 'posttransfer' editing and involves deacylation of mischarged Ala-tRNA(Pro). The misacylated Cys-tRNA(Pro) is not edited by ProRS. The polypeptide is Proline--tRNA ligase (Photorhabdus laumondii subsp. laumondii (strain DSM 15139 / CIP 105565 / TT01) (Photorhabdus luminescens subsp. laumondii)).